Here is an 874-residue protein sequence, read N- to C-terminus: MKAAEIREKFLKFFESKGHTIVRSSSLVPGNDPTLMFTNSGMVQFKDVFLGTDPRPYSRATTAQRSVRAGGKHNDLENVGYTARHHTFFEMLGNFSFGDYFKHDAIKFAWELLTTVYQLPKDKLWVTVYQEDDEAYDIWAKEVGVPTERIIRIGDNKGARYASDNFWTMGDTGPCGPCTEIFYDHGPDVWGGPPGSPEEDGDRYIEIWNLVFMQFNRDAQGNMTRLPKQSVDTGMGLERLAAVLQHVHSNYEIDLFQNLIKAAARVTEISDLTNNSLKVIADHIRACSFLIVDGVIPGNEGRGYVLRRIVRRAIRHGYKLGRKGAFFHKLVADLVAEMGTAYPELKEAEQRVTDVLRQEEERFFETIEHGMSILEAALAEVEAKGGKVLDGELAFKLHDTYGFPLDLTADVCRERGMTVDEPAFDDAMARQREQARAAGKFKATQGLEYSGAKTTFHGYEEIAFDDAKVVALYVDGSAVNEVKAGQDAVVVLDHTPFYAESGGQVGDQGVLANAATRFAVADTLKVQADVIGHHGTLEQGTLKVGDVLRAEIDAQRRARTQRNHSATHLMHKALREVLGAHVQQKGSLVDADKTRFDFAHNAPMTDDEIRRVEQIVNNEILANAPGIVRVMPYDEAVKGGAMALFGEKYGDEVRVLDLGFSRELCGGTHVHRTGDIGLFKIVVEGGVAAGIRRVEAITGDNAVRYVQELDARVNEAAAALKAQPSELTQRIAQVQEQVKSLEKELGALKSKLASSQGDELAQQAVEVAGVYVLAATLDGADAKTLRETVDKLKDKLKSAAIVLAAVEGGKVSLIAGVTPDASKKVKAGELVNFVAQQVGGKGGGRPDMAQAGGTEPANLPGALAGVKGWVEERL.

Residues H564, H568, C665, and H669 each contribute to the Zn(2+) site.

Belongs to the class-II aminoacyl-tRNA synthetase family. Zn(2+) serves as cofactor.

It localises to the cytoplasm. It carries out the reaction tRNA(Ala) + L-alanine + ATP = L-alanyl-tRNA(Ala) + AMP + diphosphate. In terms of biological role, catalyzes the attachment of alanine to tRNA(Ala) in a two-step reaction: alanine is first activated by ATP to form Ala-AMP and then transferred to the acceptor end of tRNA(Ala). Also edits incorrectly charged Ser-tRNA(Ala) and Gly-tRNA(Ala) via its editing domain. In Burkholderia cenocepacia (strain HI2424), this protein is Alanine--tRNA ligase.